The following is a 271-amino-acid chain: MSTTGELYLRIAQDGDRSIAVDQYHRGALRVFRPLYLDGTGQVAYYVVNPGGGYLDGDSYLTEVEVLQGASAVLTTQAATKIYRTPTRPVRQDTRASLAPGAVLELVPDQVIAYRGASYRQTTLVEMDPTATFMSLEVLTPGWAPDGSAFGYDCVRMRTEIRVGGRCAVVDNLRLVPGEAGMAGLGALEGHSHLASFTALDARIDAALVTEIGELLEVDGVRGAVTRVPGPGLIARALGDDTTRLTALMLDISELLRDRWFGAPRLDLRKY.

It belongs to the UreD family. In terms of assembly, ureD, UreF and UreG form a complex that acts as a GTP-hydrolysis-dependent molecular chaperone, activating the urease apoprotein by helping to assemble the nickel containing metallocenter of UreC. The UreE protein probably delivers the nickel.

The protein resides in the cytoplasm. Required for maturation of urease via the functional incorporation of the urease nickel metallocenter. The sequence is that of Urease accessory protein UreD from Actinomyces naeslundii.